Reading from the N-terminus, the 765-residue chain is Phosphoribosylformylglycinamidine synthase subunit PurL (765 aa).

Histidine 59 is an active-site residue. Residues tyrosine 62 and lysine 104 each coordinate ATP. Glutamate 106 lines the Mg(2+) pocket. Substrate-binding positions include 107–110 (SHNH) and arginine 129. Histidine 108 acts as the Proton acceptor in catalysis. A Mg(2+)-binding site is contributed by aspartate 130. Residue glutamine 254 coordinates substrate. Position 282 (aspartate 282) interacts with Mg(2+). Residue 326-328 (ESQ) participates in substrate binding. Residues asparagine 522 and glycine 559 each coordinate ATP. Asparagine 560 provides a ligand contact to Mg(2+). Serine 562 is a binding site for substrate.

Belongs to the FGAMS family. Monomer. Part of the FGAM synthase complex composed of 1 PurL, 1 PurQ and 2 PurS subunits.

The protein resides in the cytoplasm. It catalyses the reaction N(2)-formyl-N(1)-(5-phospho-beta-D-ribosyl)glycinamide + L-glutamine + ATP + H2O = 2-formamido-N(1)-(5-O-phospho-beta-D-ribosyl)acetamidine + L-glutamate + ADP + phosphate + H(+). Its pathway is purine metabolism; IMP biosynthesis via de novo pathway; 5-amino-1-(5-phospho-D-ribosyl)imidazole from N(2)-formyl-N(1)-(5-phospho-D-ribosyl)glycinamide: step 1/2. In terms of biological role, part of the phosphoribosylformylglycinamidine synthase complex involved in the purines biosynthetic pathway. Catalyzes the ATP-dependent conversion of formylglycinamide ribonucleotide (FGAR) and glutamine to yield formylglycinamidine ribonucleotide (FGAM) and glutamate. The FGAM synthase complex is composed of three subunits. PurQ produces an ammonia molecule by converting glutamine to glutamate. PurL transfers the ammonia molecule to FGAR to form FGAM in an ATP-dependent manner. PurS interacts with PurQ and PurL and is thought to assist in the transfer of the ammonia molecule from PurQ to PurL. The chain is Phosphoribosylformylglycinamidine synthase subunit PurL from Thermobifida fusca (strain YX).